We begin with the raw amino-acid sequence, 96 residues long: uncharacterized protein (96 aa).

A coiled-coil region spans residues 9–86 (EELKSQAQVY…NKYADTVAER (78 aa)).

It belongs to the WXG100 family. sagEsxA-like subfamily.

This is an uncharacterized protein from Clostridium acetobutylicum (strain ATCC 824 / DSM 792 / JCM 1419 / IAM 19013 / LMG 5710 / NBRC 13948 / NRRL B-527 / VKM B-1787 / 2291 / W).